The following is a 412-amino-acid chain: Homoserine dehydrogenase (412 aa).

Residues 9–16 and Lys105 contribute to the NADP(+) site; that span reads LGIGTVGG. Glu190 lines the substrate pocket. Lys205 acts as the Proton donor in catalysis. Positions 330–407 constitute an ACT domain; that stretch reads YLRLRAVDKP…ISGKVTRLRM (78 aa).

Belongs to the homoserine dehydrogenase family.

The enzyme catalyses L-homoserine + NADP(+) = L-aspartate 4-semialdehyde + NADPH + H(+). It catalyses the reaction L-homoserine + NAD(+) = L-aspartate 4-semialdehyde + NADH + H(+). It participates in amino-acid biosynthesis; L-methionine biosynthesis via de novo pathway; L-homoserine from L-aspartate: step 3/3. Its pathway is amino-acid biosynthesis; L-threonine biosynthesis; L-threonine from L-aspartate: step 3/5. This is Homoserine dehydrogenase (hom) from Methylobacillus glycogenes.